We begin with the raw amino-acid sequence, 215 residues long: Protein GET1 (215 aa).

The Lumenal segment spans residues 1–4; sequence MINL. The chain crosses the membrane as a helical span at residues 5-24; that stretch reads ALVIFLCTLLNQIVSWVGKS. The Cytoplasmic segment spans residues 25–108; that stretch reads VLQEIAFTAY…SFSKKFSTLL (84 aa). Residues 73-94 adopt a coiled-coil conformation; that stretch reads AKLRRKLDKGLADLEKTNNTLS. The chain crosses the membrane as a helical span at residues 109 to 129; the sequence is WLMTTGAQFLLSWWFRKQPIF. Over 130-153 the chain is Lumenal; it reads WLPEGWVPYPVAWLLSFPSAPIGS. A helical transmembrane segment spans residues 154 to 170; sequence VSSGAWGAICRRVLSTL. The Cytoplasmic segment spans residues 171-215; the sequence is QEIIQSVLAPSPAATGPVPTGPSSAKNDQPEAKIEALALEHEKLD. Residues 181–202 are disordered; sequence SPAATGPVPTGPSSAKNDQPEA.

The protein belongs to the WRB/GET1 family. In terms of assembly, interacts with GET3.

The protein resides in the endoplasmic reticulum membrane. Required for the post-translational delivery of tail-anchored (TA) proteins to the endoplasmic reticulum. Acts as a membrane receptor for soluble GET3, which recognizes and selectively binds the transmembrane domain of TA proteins in the cytosol. In Cryptococcus neoformans var. neoformans serotype D (strain B-3501A) (Filobasidiella neoformans), this protein is Protein GET1.